The sequence spans 454 residues: Argininosuccinate synthase (454 aa).

Residues 17-25 and alanine 43 contribute to the ATP site; that span reads AFSGGLDTS. Position 99 (tyrosine 99) interacts with L-citrulline. ATP is bound by residues glycine 129 and threonine 131. L-aspartate is bound by residues threonine 131, asparagine 135, and aspartate 136. Asparagine 135 is an L-citrulline binding site. ATP is bound at residue aspartate 136. L-citrulline is bound by residues arginine 139 and serine 192. Residue aspartate 194 participates in ATP binding. Threonine 201, glutamate 203, and glutamate 280 together coordinate L-citrulline.

It belongs to the argininosuccinate synthase family. Type 2 subfamily. Homotetramer.

It is found in the cytoplasm. The enzyme catalyses L-citrulline + L-aspartate + ATP = 2-(N(omega)-L-arginino)succinate + AMP + diphosphate + H(+). It functions in the pathway amino-acid biosynthesis; L-arginine biosynthesis; L-arginine from L-ornithine and carbamoyl phosphate: step 2/3. This Yersinia enterocolitica serotype O:8 / biotype 1B (strain NCTC 13174 / 8081) protein is Argininosuccinate synthase.